The following is a 503-amino-acid chain: Probable cytosol aminopeptidase (503 aa).

Mn(2+)-binding residues include Lys270 and Asp275. Lys282 is an active-site residue. Residues Asp293, Asp352, and Glu354 each contribute to the Mn(2+) site. The active site involves Arg356.

Belongs to the peptidase M17 family. Requires Mn(2+) as cofactor.

It localises to the cytoplasm. The enzyme catalyses Release of an N-terminal amino acid, Xaa-|-Yaa-, in which Xaa is preferably Leu, but may be other amino acids including Pro although not Arg or Lys, and Yaa may be Pro. Amino acid amides and methyl esters are also readily hydrolyzed, but rates on arylamides are exceedingly low.. It catalyses the reaction Release of an N-terminal amino acid, preferentially leucine, but not glutamic or aspartic acids.. Functionally, presumably involved in the processing and regular turnover of intracellular proteins. Catalyzes the removal of unsubstituted N-terminal amino acids from various peptides. This is Probable cytosol aminopeptidase from Escherichia coli O139:H28 (strain E24377A / ETEC).